Consider the following 259-residue polypeptide: Exotoxin A regulatory protein (259 aa).

It localises to the cell inner membrane. Functionally, positive regulation of toxA gene transcription. This is Exotoxin A regulatory protein (toxR) from Pseudomonas aeruginosa (strain ATCC 15692 / DSM 22644 / CIP 104116 / JCM 14847 / LMG 12228 / 1C / PRS 101 / PAO1).